A 234-amino-acid polypeptide reads, in one-letter code: Demethylmenaquinone methyltransferase (234 aa).

Residues threonine 58, aspartate 79, and 106–107 (NA) contribute to the S-adenosyl-L-methionine site.

Belongs to the class I-like SAM-binding methyltransferase superfamily. MenG/UbiE family.

The catalysed reaction is a 2-demethylmenaquinol + S-adenosyl-L-methionine = a menaquinol + S-adenosyl-L-homocysteine + H(+). It participates in quinol/quinone metabolism; menaquinone biosynthesis; menaquinol from 1,4-dihydroxy-2-naphthoate: step 2/2. Functionally, methyltransferase required for the conversion of demethylmenaquinol (DMKH2) to menaquinol (MKH2). The chain is Demethylmenaquinone methyltransferase from Geobacillus stearothermophilus (Bacillus stearothermophilus).